The chain runs to 31 residues: Conotoxin (31 aa).

Belongs to the conotoxin S superfamily. Post-translationally, contains 5 disulfide bonds. In terms of tissue distribution, expressed by the venom duct.

It is found in the secreted. This chain is Conotoxin, found in Conus striatus (Striated cone).